Consider the following 365-residue polypeptide: Heme A synthase (365 aa).

The next 5 helical transmembrane spans lie at 23-43 (LLRIWLRVVLFTLFCLVLVGG), 109-129 (LLARTIGLVFALPLAFFWLTG), 137-157 (LPLVGLLALGGFQGFVGWWMV), 172-192 (LATHLTIACLIFAGCMWILRG), and 208-228 (GFAALLTVLCLFQIYLGALVA). His272 serves as a coordination point for heme. 3 helical membrane-spanning segments follow: residues 274–294 (LGAYTLFAATLWHMVSMARAL), 303–323 (AVLFFVLISVQAGLGITTLLM), and 327–347 (IHVALAHQGMALILLGFSVAH). A heme-binding site is contributed by His333.

Belongs to the COX15/CtaA family. Type 2 subfamily. As to quaternary structure, interacts with CtaB. Heme b is required as a cofactor.

It localises to the cell membrane. The catalysed reaction is Fe(II)-heme o + 2 A + H2O = Fe(II)-heme a + 2 AH2. The protein operates within porphyrin-containing compound metabolism; heme A biosynthesis; heme A from heme O: step 1/1. In terms of biological role, catalyzes the conversion of heme O to heme A by two successive hydroxylations of the methyl group at C8. The first hydroxylation forms heme I, the second hydroxylation results in an unstable dihydroxymethyl group, which spontaneously dehydrates, resulting in the formyl group of heme A. In Agrobacterium fabrum (strain C58 / ATCC 33970) (Agrobacterium tumefaciens (strain C58)), this protein is Heme A synthase.